We begin with the raw amino-acid sequence, 137 residues long: Basic phospholipase A2 homolog W6D49 (137 aa).

The signal sequence occupies residues 1 to 16 (MRTLWILAVLLVSVDG). 7 cysteine pairs are disulfide-bonded: C42–C131, C44–C60, C59–C111, C65–C137, C66–C104, C73–C97, and C91–C102. Residues 121–133 (KKQQFNTGIFCSK) are important for membrane-damaging activities in eukaryotes and bacteria; heparin-binding.

As to quaternary structure, monomer. In terms of tissue distribution, expressed by the venom gland.

The protein localises to the secreted. Its activity is regulated as follows. Heparin reduces its edema-inducing activity. Snake venom phospholipase A2 homolog that lacks enzymatic activity. Shows myotoxin activities and displays edema-inducing activities. A model of myotoxic mechanism has been proposed: an apo Lys49-PLA2 is activated by the entrance of a hydrophobic molecule (e.g. fatty acid) at the hydrophobic channel of the protein leading to a reorientation of a monomer. This reorientation causes a transition between 'inactive' to 'active' states, causing alignment of C-terminal and membrane-docking sites (MDoS) side-by-side and putting the membrane-disruption sites (MDiS) in the same plane, exposed to solvent and in a symmetric position for both monomers. The MDoS region stabilizes the toxin on membrane by the interaction of charged residues with phospholipid head groups. Subsequently, the MDiS region destabilizes the membrane with penetration of hydrophobic residues. This insertion causes a disorganization of the membrane, allowing an uncontrolled influx of ions (i.e. calcium and sodium), and eventually triggering irreversible intracellular alterations and cell death. The sequence is that of Basic phospholipase A2 homolog W6D49 from Calloselasma rhodostoma (Malayan pit viper).